A 550-amino-acid chain; its full sequence is Chaperonin GroEL (550 aa).

ATP-binding positions include 29 to 32 (TLGP), Lys-50, 86 to 90 (DGTTT), Gly-414, and Asp-495.

It belongs to the chaperonin (HSP60) family. Forms a cylinder of 14 subunits composed of two heptameric rings stacked back-to-back. Interacts with the co-chaperonin GroES.

It localises to the cytoplasm. It catalyses the reaction ATP + H2O + a folded polypeptide = ADP + phosphate + an unfolded polypeptide.. Its function is as follows. Together with its co-chaperonin GroES, plays an essential role in assisting protein folding. The GroEL-GroES system forms a nano-cage that allows encapsulation of the non-native substrate proteins and provides a physical environment optimized to promote and accelerate protein folding. The chain is Chaperonin GroEL from Parvibaculum lavamentivorans (strain DS-1 / DSM 13023 / NCIMB 13966).